A 119-amino-acid chain; its full sequence is MDKIINAVETNYKKEDIPEIRPGDTVRVNVKVVEGEGEKKRERIQPFEGIVIKIRGAGLGRSFTVRKMGADRVGVERIFPFHSPSISSIEVLKKGKTRRAKLYYLRDVKGKIRIKERKD.

Belongs to the bacterial ribosomal protein bL19 family.

Its function is as follows. This protein is located at the 30S-50S ribosomal subunit interface and may play a role in the structure and function of the aminoacyl-tRNA binding site. The protein is Large ribosomal subunit protein bL19 of Petrotoga mobilis (strain DSM 10674 / SJ95).